We begin with the raw amino-acid sequence, 592 residues long: Aspartate--tRNA(Asp/Asn) ligase (592 aa).

Glu-175 is an L-aspartate binding site. The aspartate stretch occupies residues 199 to 202; that stretch reads QQFK. L-aspartate-binding residues include Arg-221 and His-451. 221–223 contacts ATP; the sequence is RDE. Glu-485 contributes to the ATP binding site. Residue Arg-492 coordinates L-aspartate. 537–540 is an ATP binding site; that stretch reads GIDR.

The protein belongs to the class-II aminoacyl-tRNA synthetase family. Type 1 subfamily. As to quaternary structure, homodimer.

Its subcellular location is the cytoplasm. The enzyme catalyses tRNA(Asx) + L-aspartate + ATP = L-aspartyl-tRNA(Asx) + AMP + diphosphate. In terms of biological role, aspartyl-tRNA synthetase with relaxed tRNA specificity since it is able to aspartylate not only its cognate tRNA(Asp) but also tRNA(Asn). Reaction proceeds in two steps: L-aspartate is first activated by ATP to form Asp-AMP and then transferred to the acceptor end of tRNA(Asp/Asn). In Phenylobacterium zucineum (strain HLK1), this protein is Aspartate--tRNA(Asp/Asn) ligase.